A 310-amino-acid polypeptide reads, in one-letter code: 4-hydroxythreonine-4-phosphate dehydrogenase (310 aa).

Substrate is bound at residue T129. A divalent metal cation is bound by residues H158, H202, and H250. Residues K258, N267, and R276 each coordinate substrate.

This sequence belongs to the PdxA family. In terms of assembly, homodimer. It depends on a divalent metal cation as a cofactor.

Its subcellular location is the cytoplasm. The catalysed reaction is 4-(phosphooxy)-L-threonine + NAD(+) = 3-amino-2-oxopropyl phosphate + CO2 + NADH. It functions in the pathway cofactor biosynthesis; pyridoxine 5'-phosphate biosynthesis; pyridoxine 5'-phosphate from D-erythrose 4-phosphate: step 4/5. Catalyzes the NAD(P)-dependent oxidation of 4-(phosphooxy)-L-threonine (HTP) into 2-amino-3-oxo-4-(phosphooxy)butyric acid which spontaneously decarboxylates to form 3-amino-2-oxopropyl phosphate (AHAP). This chain is 4-hydroxythreonine-4-phosphate dehydrogenase, found in Hydrogenobaculum sp. (strain Y04AAS1).